Here is a 337-residue protein sequence, read N- to C-terminus: Phosphate acyltransferase (337 aa).

Belongs to the PlsX family. In terms of assembly, homodimer. Probably interacts with PlsY.

The protein localises to the cytoplasm. It carries out the reaction a fatty acyl-[ACP] + phosphate = an acyl phosphate + holo-[ACP]. It participates in lipid metabolism; phospholipid metabolism. Catalyzes the reversible formation of acyl-phosphate (acyl-PO(4)) from acyl-[acyl-carrier-protein] (acyl-ACP). This enzyme utilizes acyl-ACP as fatty acyl donor, but not acyl-CoA. This Halalkalibacterium halodurans (strain ATCC BAA-125 / DSM 18197 / FERM 7344 / JCM 9153 / C-125) (Bacillus halodurans) protein is Phosphate acyltransferase.